A 559-amino-acid polypeptide reads, in one-letter code: MATALSEEELDNEDYYSLLNVRREASSEELKAAYRRLCMLYHPDKHRDPELKSQAERLFNLVHQAYEVLSDPQTRAIYDIYGKRGLEMEGWEVVERKRTPAEIREEFERLQREREERRLQQRTNPKGTISVGVDATDLFDRYDEEYEDVSGSGFPQIEINKMHISQSIEAPLTATDTAILSGSLSTQNGNGGGSVNFALRRVTSAKGWGELEFGAGDLQGPLFGLKLFRNLTPRCFVTTNCALQFSSRGIRPGLTTVLARNLDKNTVGYLQWRWGIQSAMNTSIVRDTKTCHFTVALQLGIPHSFALISYQHKFQDDDQTRVKGSLKAGFFGTIVEYGAERKISRHSVLGAAVSIGVPQGVSLKVKLNRASQTYFFPIHLTDQLLPSAVFYATVGPLVVYLAVHRLIIRPYLRAQKEKELEKQRENTASDILQKKQEAEAAVRLMQESVRRIIEAEESRMGLIIVNAWYGKFVNDKSRKNEKVKVIDVTVPLQCLVKDSKLILTEASKAGLPGFYDPCVGEEKSLRVLYQFRGVLHQVMVPDSEALRIPKQSHRIDTDG.

Ala2 is modified (N-acetylalanine). Positions 14–82 constitute a J domain; it reads DYYSLLNVRR…QTRAIYDIYG (69 aa). Ser204 is modified (phosphoserine). A coiled-coil region spans residues 415–457; that stretch reads QKEKELEKQRENTASDILQKKQEAEAAVRLMQESVRRIIEAEE.

It belongs to the DNAJC11 family. As to quaternary structure, associates with the mitochondrial contact site and cristae organizing system (MICOS) complex, composed of at least MICOS10/MIC10, CHCHD3/MIC19, CHCHD6/MIC25, APOOL/MIC27, IMMT/MIC60, APOO/MIC23/MIC26 and QIL1/MIC13. This complex was also known under the names MINOS or MitOS complex. The MICOS complex associates with mitochondrial outer membrane proteins SAMM50, MTX1 and MTX2 (together described as components of the mitochondrial outer membrane sorting assembly machinery (SAM) complex) and DNAJC11, mitochondrial inner membrane protein TMEM11 and with HSPA9. The MICOS and SAM complexes together with DNAJC11 are part of a large protein complex spanning both membranes termed the mitochondrial intermembrane space bridging (MIB) complex.

It is found in the mitochondrion. The protein resides in the mitochondrion outer membrane. Required for mitochondrial inner membrane organization. Seems to function through its association with the MICOS complex and the mitochondrial outer membrane sorting assembly machinery (SAM) complex. This is DnaJ homolog subfamily C member 11 (Dnajc11) from Mus musculus (Mouse).